The chain runs to 237 residues: MSAPASTTQATGSTTSTTTKTAGATPATASGLFTIPDGDFFSTARAVVASDAVATNEDLSEIEAVWKDMKVPTDTMAQAAWDLVRHCADVGSSAQTEMIDTGPYSNGISRARLAAAIKEVCTLRQFCMKYAPVVWNWMLTNNSPPANWQAQGFKPEHKFAAFDFFNGVTNPAAIMPKEGLIRPPSEAEMNAAQTAAFVKITKARAQSNDFASLDAAVTRGRITGTTTAEAVVTLPPP.

Residues 1 to 28 are disordered; sequence MSAPASTTQATGSTTSTTTKTAGATPAT.

The protein belongs to the potexvirus capsid protein family.

It is found in the virion. In terms of biological role, required for genome encapsidation. Forms ribonucleoprotein complexes along with TGB1 helicase and viral RNA. The protein is Coat protein of Brassica campestris (Field mustard).